The following is a 123-amino-acid chain: UPF0102 protein PSPPH_4120 (123 aa).

It belongs to the UPF0102 family.

The chain is UPF0102 protein PSPPH_4120 from Pseudomonas savastanoi pv. phaseolicola (strain 1448A / Race 6) (Pseudomonas syringae pv. phaseolicola (strain 1448A / Race 6)).